A 424-amino-acid polypeptide reads, in one-letter code: Protein ImpB (424 aa).

A UmuC domain is found at 2 to 189; that stretch reads FALADINSFY…QPVGEVWGVG (188 aa).

It belongs to the DNA polymerase type-Y family.

Its function is as follows. Involved in UV protection and mutation. This is Protein ImpB (impB) from Salmonella typhimurium.